The sequence spans 228 residues: 7-cyano-7-deazaguanine synthase (228 aa).

11–21 (LSGGLDSATVL) lines the ATP pocket. Residues Cys191, Cys201, Cys204, and Cys207 each coordinate Zn(2+).

Belongs to the QueC family. It depends on Zn(2+) as a cofactor.

It catalyses the reaction 7-carboxy-7-deazaguanine + NH4(+) + ATP = 7-cyano-7-deazaguanine + ADP + phosphate + H2O + H(+). Its pathway is purine metabolism; 7-cyano-7-deazaguanine biosynthesis. Functionally, catalyzes the ATP-dependent conversion of 7-carboxy-7-deazaguanine (CDG) to 7-cyano-7-deazaguanine (preQ(0)). The sequence is that of 7-cyano-7-deazaguanine synthase from Magnetococcus marinus (strain ATCC BAA-1437 / JCM 17883 / MC-1).